Consider the following 437-residue polypeptide: tRNA-2-methylthio-N(6)-dimethylallyladenosine synthase (437 aa).

In terms of domain architecture, MTTase N-terminal spans 1 to 115; that stretch reads MKVYIETMGC…ISQVIHKEKA (115 aa). Positions 10, 46, 78, 148, 152, and 155 each coordinate [4Fe-4S] cluster. The region spanning 134–367 is the Radical SAM core domain; sequence KKAQIRSLLN…QNRHKEILEE (234 aa). One can recognise a TRAM domain in the interval 370–436; the sequence is KLEVGKTHVV…KGRLIATAKG (67 aa).

This sequence belongs to the methylthiotransferase family. MiaB subfamily. As to quaternary structure, monomer. [4Fe-4S] cluster serves as cofactor.

The protein localises to the cytoplasm. The enzyme catalyses N(6)-dimethylallyladenosine(37) in tRNA + (sulfur carrier)-SH + AH2 + 2 S-adenosyl-L-methionine = 2-methylsulfanyl-N(6)-dimethylallyladenosine(37) in tRNA + (sulfur carrier)-H + 5'-deoxyadenosine + L-methionine + A + S-adenosyl-L-homocysteine + 2 H(+). Functionally, catalyzes the methylthiolation of N6-(dimethylallyl)adenosine (i(6)A), leading to the formation of 2-methylthio-N6-(dimethylallyl)adenosine (ms(2)i(6)A) at position 37 in tRNAs that read codons beginning with uridine. In Helicobacter pylori (strain Shi470), this protein is tRNA-2-methylthio-N(6)-dimethylallyladenosine synthase.